We begin with the raw amino-acid sequence, 91 residues long: Conotoxin Im9.1 (91 aa).

A signal peptide spans 1-23; it reads MSKVGVVPLIFLVLLSIAALQNG. Positions 24–55 are excised as a propeptide; it reads DDPRRQRDEKQSPQGDILRSTLTKYSYNIQRR. Cystine bridges form between Cys-56/Cys-72, Cys-63/Cys-83, and Cys-66/Cys-86.

The protein belongs to the conotoxin M superfamily. Expressed by the venom duct.

The protein localises to the secreted. Its function is as follows. Probable neurotoxin. The polypeptide is Conotoxin Im9.1 (Conus imperialis (Imperial cone)).